A 95-amino-acid polypeptide reads, in one-letter code: Defensin-like protein 232 (95 aa).

A signal peptide spans 1–26 (MRCTTLIMVSFVVSCLLLSLVEESEA). Disulfide bonds link cysteine 33/cysteine 94, cysteine 43/cysteine 68, cysteine 51/cysteine 84, and cysteine 66/cysteine 86.

The protein belongs to the DEFL family. Flower buds.

The protein resides in the secreted. In Arabidopsis thaliana (Mouse-ear cress), this protein is Defensin-like protein 232 (SCRL23).